Here is a 239-residue protein sequence, read N- to C-terminus: Hydroxyacylglutathione hydrolase (239 aa).

7 residues coordinate Zn(2+): histidine 54, histidine 56, aspartate 58, histidine 59, histidine 112, aspartate 131, and histidine 169.

Belongs to the metallo-beta-lactamase superfamily. Glyoxalase II family. In terms of assembly, monomer. Zn(2+) is required as a cofactor.

The catalysed reaction is an S-(2-hydroxyacyl)glutathione + H2O = a 2-hydroxy carboxylate + glutathione + H(+). Its pathway is secondary metabolite metabolism; methylglyoxal degradation; (R)-lactate from methylglyoxal: step 2/2. Functionally, thiolesterase that catalyzes the hydrolysis of S-D-lactoyl-glutathione to form glutathione and D-lactic acid. The sequence is that of Hydroxyacylglutathione hydrolase from Pelagibacter ubique (strain HTCC1062).